The following is a 256-amino-acid chain: MDIFHAIILGIVEGLTEFLPVSSTGHLILVSELLGIKQDDFHKTFEISIQLGSILAVLALFRERLFSGVDIWLKLAVAFIPTGALGFLLYKHVKALFAPSTVAYALILGGIVFLVLEWLHKDKEYKINSVESIGYKEALAIGFFQALAMIPGTSRSGSTIVGGLILGLNRKVAAEFSFLLALPTMFIATGYDLYKNSHTLSIENLSALGVGFVVAFIFAMIAVKGFLKFISRFNFVPFGIYRIILGIIFLFYLDLI.

The next 7 membrane-spanning stretches (helical) occupy residues 1–21 (MDIFHAIILGIVEGLTEFLPV), 41–61 (FHKTFEISIQLGSILAVLALF), 69–89 (VDIWLKLAVAFIPTGALGFLL), 96–116 (LFAPSTVAYALILGGIVFLVL), 172–192 (VAAEFSFLLALPTMFIATGYD), 207–227 (ALGVGFVVAFIFAMIAVKGFL), and 233–253 (FNFVPFGIYRIILGIIFLFYL).

The protein belongs to the UppP family.

The protein localises to the cell inner membrane. It catalyses the reaction di-trans,octa-cis-undecaprenyl diphosphate + H2O = di-trans,octa-cis-undecaprenyl phosphate + phosphate + H(+). In terms of biological role, catalyzes the dephosphorylation of undecaprenyl diphosphate (UPP). Confers resistance to bacitracin. The polypeptide is Undecaprenyl-diphosphatase (Wolinella succinogenes (strain ATCC 29543 / DSM 1740 / CCUG 13145 / JCM 31913 / LMG 7466 / NCTC 11488 / FDC 602W) (Vibrio succinogenes)).